The chain runs to 739 residues: Vascular cell adhesion protein 1 (739 aa).

Residues 1 to 24 (MPVKMVAIFGASTVLWILFAVSQA) form the signal peptide. Ig-like C2-type domains lie at 25 to 111 (FKIE…IQVD), 119 to 212 (PEIQ…KERE), 223 to 309 (PKNT…LIVQ), 312 to 397 (PFTV…KTIQ), 408 to 506 (EIEI…QTLY), 514 to 595 (PTIW…VELI), and 601 to 682 (KDIQ…RSLT). Residues 25-698 (FKIEISPEYK…ENNKDYFSPE (674 aa)) lie on the Extracellular side of the membrane. 5 disulfides stabilise this stretch: cysteine 47–cysteine 95, cysteine 52–cysteine 99, cysteine 137–cysteine 195, cysteine 246–cysteine 291, and cysteine 335–cysteine 383. Asparagine 273 carries an N-linked (GlcNAc...) asparagine glycan. 4 N-linked (GlcNAc...) asparagine glycosylation sites follow: asparagine 424, asparagine 531, asparagine 561, and asparagine 650. A disulfide bond links cysteine 534 and cysteine 579. A helical membrane pass occupies residues 699–720 (LLALYFASSLVIPAIGMIIYFA). The Cytoplasmic portion of the chain corresponds to 721–739 (RKANMKGSYSLVEAQKSKV).

As to quaternary structure, binds to ECMV-D capsid proteins and acts as a receptor for this virus. In terms of processing, cleaved by the metalloproteinase ADAM17 to generate the soluble form. Sialoglycoprotein. Post-translationally, ubiquitinated by TRIM65 via 'Lys-48'-linked ubiquitination; leading to proteasomal degradation. As to expression, expressed in aortic endothelial cells, with low expression in the descending thoracic aorta and the outer curvature of the aortic arch, where pulsatory shear stress exists, and high in the inner curvature of the aortic arch, where oscillatory shear stress prevails (at protein level). Expressed on inflamed vascular endothelium, as well as on macrophage-like and dendritic cell types in both normal and inflamed tissue.

The protein resides in the cell membrane. It is found in the secreted. Functionally, cell adhesion glycoprotein predominantly expressed on the surface of endothelial cells that plays an important role in immune surveillance and inflammation. Acts as a major regulator of leukocyte adhesion to the endothelium through interaction with different types of integrins. During inflammatory responses, binds ligands on the surface of activated endothelial cells to initiate the activation of calcium channels and the plasma membrane-associated small GTPase RAC1 leading to leukocyte transendothelial migration. Also serves as a quality-control checkpoint for entry into bone marrow by providing a 'don't-eat-me' stamping in the context of major histocompatibility complex (MHC) class-I presentation. This chain is Vascular cell adhesion protein 1 (Vcam1), found in Rattus norvegicus (Rat).